Here is a 357-residue protein sequence, read N- to C-terminus: UDP-N-acetylglucosamine--N-acetylmuramyl-(pentapeptide) pyrophosphoryl-undecaprenol N-acetylglucosamine transferase (357 aa).

Residues 12-14 (TGG), Asn124, Arg163, Ser191, Ile245, 264-269 (ALTVSE), and Gln290 each bind UDP-N-acetyl-alpha-D-glucosamine.

It belongs to the glycosyltransferase 28 family. MurG subfamily.

It localises to the cell inner membrane. It catalyses the reaction di-trans,octa-cis-undecaprenyl diphospho-N-acetyl-alpha-D-muramoyl-L-alanyl-D-glutamyl-meso-2,6-diaminopimeloyl-D-alanyl-D-alanine + UDP-N-acetyl-alpha-D-glucosamine = di-trans,octa-cis-undecaprenyl diphospho-[N-acetyl-alpha-D-glucosaminyl-(1-&gt;4)]-N-acetyl-alpha-D-muramoyl-L-alanyl-D-glutamyl-meso-2,6-diaminopimeloyl-D-alanyl-D-alanine + UDP + H(+). It participates in cell wall biogenesis; peptidoglycan biosynthesis. In terms of biological role, cell wall formation. Catalyzes the transfer of a GlcNAc subunit on undecaprenyl-pyrophosphoryl-MurNAc-pentapeptide (lipid intermediate I) to form undecaprenyl-pyrophosphoryl-MurNAc-(pentapeptide)GlcNAc (lipid intermediate II). The sequence is that of UDP-N-acetylglucosamine--N-acetylmuramyl-(pentapeptide) pyrophosphoryl-undecaprenol N-acetylglucosamine transferase from Nitrosospira multiformis (strain ATCC 25196 / NCIMB 11849 / C 71).